The sequence spans 57 residues: Benzylsuccinate synthase gamma subunit (57 aa).

As to quaternary structure, heterohexamer composed of 2 alpha subunits, 2 beta subunits and 2 gamma subunits.

It carries out the reaction toluene + fumarate = 2-benzylsuccinate. It functions in the pathway xenobiotic degradation; toluene degradation. Its activity is regulated as follows. Activated by the benzylsuccinate synthase activating enzyme BssD. Rapidly inactivated by oxygen. Its function is as follows. Catalyzes the addition of fumarate to the methyl group of toluene, leading to the formation of benzylsuccinate. This Thauera aromatica protein is Benzylsuccinate synthase gamma subunit (bssC).